The primary structure comprises 212 residues: Thymidylate kinase (212 aa).

An ATP-binding site is contributed by 10–17; that stretch reads GPDGAGKT.

Belongs to the thymidylate kinase family.

The enzyme catalyses dTMP + ATP = dTDP + ADP. Its function is as follows. Phosphorylation of dTMP to form dTDP in both de novo and salvage pathways of dTTP synthesis. The sequence is that of Thymidylate kinase from Lactobacillus delbrueckii subsp. bulgaricus (strain ATCC 11842 / DSM 20081 / BCRC 10696 / JCM 1002 / NBRC 13953 / NCIMB 11778 / NCTC 12712 / WDCM 00102 / Lb 14).